The chain runs to 350 residues: tRNA uridine(34) hydroxylase (350 aa).

Residues 146-240 (DDPEAVFVDM…YARRAREQGL (95 aa)) enclose the Rhodanese domain. The active-site Cysteine persulfide intermediate is C200.

It belongs to the TrhO family.

The catalysed reaction is uridine(34) in tRNA + AH2 + O2 = 5-hydroxyuridine(34) in tRNA + A + H2O. In terms of biological role, catalyzes oxygen-dependent 5-hydroxyuridine (ho5U) modification at position 34 in tRNAs. The protein is tRNA uridine(34) hydroxylase of Erwinia tasmaniensis (strain DSM 17950 / CFBP 7177 / CIP 109463 / NCPPB 4357 / Et1/99).